Consider the following 126-residue polypeptide: Flagellar protein FliT (126 aa).

Residues 1-50 (MVSPHRLLKDYQQLLSLSQKILHLAISGQWDTLVEQEIVYVQSVEGLVNT) are required for homodimerization. The segment at 60–98 (MRLHLRQILQEVMDNEAKVKQLLQKRMDELSSLMGQSLK) is fliD binding.

This sequence belongs to the FliT family. Homodimer. Interacts with FliD and FlhC.

The protein localises to the cytoplasm. It localises to the cytosol. In terms of biological role, dual-function protein that regulates the transcription of class 2 flagellar operons and that also acts as an export chaperone for the filament-capping protein FliD. As a transcriptional regulator, acts as an anti-FlhDC factor; it directly binds FlhC, thus inhibiting the binding of the FlhC/FlhD complex to class 2 promoters, resulting in decreased expression of class 2 flagellar operons. As a chaperone, effects FliD transition to the membrane by preventing its premature polymerization, and by directing it to the export apparatus. This chain is Flagellar protein FliT, found in Pectobacterium atrosepticum (strain SCRI 1043 / ATCC BAA-672) (Erwinia carotovora subsp. atroseptica).